We begin with the raw amino-acid sequence, 163 residues long: uncharacterized protein (163 aa).

The next 4 membrane-spanning stretches (helical) occupy residues 19–39 (GPPS…SEGI), 63–83 (FFAD…LLGL), 87–107 (VAAV…KLRA), and 119–139 (FWGM…LIFL).

It belongs to the DoxX family.

The protein localises to the cell membrane. This is an uncharacterized protein from Mycobacterium tuberculosis (strain ATCC 25618 / H37Rv).